We begin with the raw amino-acid sequence, 261 residues long: Potassium/proton antiporter CemA (261 aa).

2 helical membrane-spanning segments follow: residues 47–67 and 138–158; these read FLVFLPWGISISFQEGLGPWV and IISHLLTNMICFAISSAYFIM.

This sequence belongs to the CemA family.

It localises to the plastid. It is found in the chloroplast inner membrane. The enzyme catalyses K(+)(in) + H(+)(out) = K(+)(out) + H(+)(in). In terms of biological role, contributes to K(+)/H(+) antiport activity by supporting proton efflux to control proton extrusion and homeostasis in chloroplasts in a light-dependent manner to modulate photosynthesis. Prevents excessive induction of non-photochemical quenching (NPQ) under continuous-light conditions. Indirectly promotes efficient inorganic carbon uptake into chloroplasts. This chain is Potassium/proton antiporter CemA, found in Ginkgo biloba (Ginkgo).